A 137-amino-acid polypeptide reads, in one-letter code: Large-conductance mechanosensitive channel (137 aa).

4 consecutive transmembrane segments (helical) span residues 9 to 29 (AFAV…GAAF), 32 to 52 (IVSS…IGGV), 54 to 74 (FGDL…VVLA), and 79 to 99 (IQSI…VKVI).

The protein belongs to the MscL family. Homopentamer.

Its subcellular location is the cell inner membrane. Functionally, channel that opens in response to stretch forces in the membrane lipid bilayer. May participate in the regulation of osmotic pressure changes within the cell. The protein is Large-conductance mechanosensitive channel of Pseudomonas fluorescens (strain ATCC BAA-477 / NRRL B-23932 / Pf-5).